A 289-amino-acid chain; its full sequence is Phospholipase A1 (289 aa).

The signal sequence occupies residues 1–20; sequence MRTGPGWLLAAAALPFFACA. Residues 21–52 are Periplasmic-facing; that stretch reads QEATIDKVHDTPAVRGSIIANMLQEHDNPFTL. A beta stranded transmembrane segment spans residues 53 to 65; the sequence is YPYESNYLLYTYT. The Extracellular segment spans residues 66–84; the sequence is SDLNKKAIESYNWSDNANK. Residues 85-99 traverse the membrane as a beta stranded segment; the sequence is DEVKFQLSLAFPLWR. The Periplasmic segment spans residues 100–105; sequence GILGDN. A beta stranded membrane pass occupies residues 106–118; sequence SLLGASYTQRSWW. At 119–128 the chain is on the extracellular side; it reads QLSNTGESAP. Ser126 is a binding site for Ca(2+). Residues 129-148 form a beta stranded membrane-spanning segment; that stretch reads FRETNYEPQLFLGFATDYSV. Topologically, residues 149–150 are periplasmic; sequence GD. The chain crosses the membrane as a beta stranded span at residues 151-164; it reads WTLRDAEFGYNHQS. Catalysis depends on His162, which acts as the Proton acceptor. The active-site Nucleophile is the Ser164. The Extracellular portion of the chain corresponds to 165–173; that stretch reads NGRSDPTSR. Residues Arg167 and Ser172 each coordinate Ca(2+). Residues 174–186 traverse the membrane as a beta stranded segment; that stretch reads SWNRLYSRLMAQN. At 187–188 the chain is on the periplasmic side; it reads GN. Residues 189 to 198 form a beta stranded membrane-spanning segment; the sequence is WLVEVKPWYV. Residues 199-216 lie on the Extracellular side of the membrane; that stretch reads IGDTSDNKNITKYMGYYQ. Ca(2+) is bound at residue Asp204. Residues 217–223 form a beta stranded membrane-spanning segment; sequence LKIGYQL. Topologically, residues 224-225 are periplasmic; the sequence is GE. A beta stranded membrane pass occupies residues 226 to 234; it reads AVLSAKGQY. The Extracellular segment spans residues 235 to 241; sequence NWNTGYG. The chain crosses the membrane as a beta stranded span at residues 242-250; sequence GAELGVSYP. Residues 251-255 lie on the Periplasmic side of the membrane; the sequence is ITKHV. The chain crosses the membrane as a beta stranded span at residues 256–265; sequence RFYTQVYSGY. The Extracellular segment spans residues 266 to 274; the sequence is GESLIDYDF. The beta stranded transmembrane segment at 275-286 threads the bilayer; it reads NQTRVGMGVMLN. The Periplasmic segment spans residues 287 to 289; it reads DLF.

Belongs to the phospholipase A1 family. Homodimer; dimerization is reversible, and the dimeric form is the active one. Ca(2+) serves as cofactor.

The protein localises to the cell outer membrane. It carries out the reaction a 1,2-diacyl-sn-glycero-3-phosphocholine + H2O = a 2-acyl-sn-glycero-3-phosphocholine + a fatty acid + H(+). The enzyme catalyses a 1,2-diacyl-sn-glycero-3-phosphocholine + H2O = a 1-acyl-sn-glycero-3-phosphocholine + a fatty acid + H(+). Hydrolysis of phosphatidylcholine with phospholipase A2 (EC 3.1.1.4) and phospholipase A1 (EC 3.1.1.32) activities. This chain is Phospholipase A1 (pldA), found in Proteus vulgaris.